The chain runs to 101 residues: Small ribosomal subunit protein uS14 (101 aa).

It belongs to the universal ribosomal protein uS14 family. As to quaternary structure, part of the 30S ribosomal subunit. Contacts proteins S3 and S10.

In terms of biological role, binds 16S rRNA, required for the assembly of 30S particles and may also be responsible for determining the conformation of the 16S rRNA at the A site. This Stenotrophomonas maltophilia (strain K279a) protein is Small ribosomal subunit protein uS14.